Here is a 113-residue protein sequence, read N- to C-terminus: Hydrogenase maturation factor HypA (113 aa).

Histidine 2 is a binding site for Ni(2+). Zn(2+)-binding residues include cysteine 73, cysteine 75, cysteine 89, and cysteine 92.

The protein belongs to the HypA/HybF family.

In terms of biological role, involved in the maturation of [NiFe] hydrogenases. Required for nickel insertion into the metal center of the hydrogenase. This is Hydrogenase maturation factor HypA from Methanocella arvoryzae (strain DSM 22066 / NBRC 105507 / MRE50).